Here is a 171-residue protein sequence, read N- to C-terminus: Actin-related protein 2/3 complex subunit 4 (171 aa).

This sequence belongs to the ARPC4 family. As to quaternary structure, component of the Arp2/3 complex composed of ARP2, ARP3, ARC40/p41-ARC, ARC35/p34-ARC, ARC18/p21-ARC, ARC19/p20-ARC and ARC16/p16-ARC.

It localises to the cytoplasm. Its subcellular location is the cytoskeleton. It is found in the actin patch. In terms of biological role, functions as actin-binding component of the Arp2/3 complex which is involved in regulation of actin polymerization and together with an activating nucleation-promoting factor (NPF) mediates the formation of branched actin networks. Seems to contact the mother actin filament. The polypeptide is Actin-related protein 2/3 complex subunit 4 (ARC19) (Saccharomyces cerevisiae (strain ATCC 204508 / S288c) (Baker's yeast)).